An 80-amino-acid polypeptide reads, in one-letter code: Small ribosomal subunit protein bS16 (80 aa).

Belongs to the bacterial ribosomal protein bS16 family.

The sequence is that of Small ribosomal subunit protein bS16 from Acholeplasma laidlawii (strain PG-8A).